The following is a 634-amino-acid chain: Kelch-like protein 22 (634 aa).

Position 2 is an N-acetylalanine (Ala2). Positions 50–117 (FDVVLVVEGR…IYTSELELSL (68 aa)) constitute a BTB domain. Kelch repeat units follow at residues 299–349 (CVVG…VLNN), 350–399 (FVYL…VVGK), 400–446 (YIYA…TLQG), 448–493 (MYIT…ALLD), 494–544 (KLFV…VLDN), and 545–593 (RIYV…VLTL). Thr463 carries the post-translational modification Phosphothreonine. Tyr466 carries the phosphotyrosine modification. Thr475 bears the Phosphothreonine mark. The segment at 600 to 634 (EQPRGTPNRSQADADFASEVMSVSDWEEFDNSSED) is disordered. Thr605 is modified (phosphothreonine). The span at 624-634 (DWEEFDNSSED) shows a compositional bias: acidic residues.

Component of the BCR(KLHL22) E3 ubiquitin ligase complex, at least composed of CUL3, KLHL22 and RBX1. Interacts with PLK1. Interacts with DEPDC5 (via DEP domain); the interaction depends on amino acid availability. Interacts with YWHAE; required for the nuclear localization of KLHL22 upon amino acid starvation.

Its subcellular location is the cytoplasm. The protein resides in the cytosol. It is found in the cytoskeleton. The protein localises to the microtubule organizing center. It localises to the centrosome. Its subcellular location is the spindle. The protein resides in the nucleus. It is found in the lysosome. Its pathway is protein modification; protein ubiquitination. Its function is as follows. Substrate-specific adapter of a BCR (BTB-CUL3-RBX1) E3 ubiquitin ligase complex required for chromosome alignment and localization of PLK1 at kinetochores. The BCR(KLHL22) ubiquitin ligase complex mediates monoubiquitination of PLK1, leading to PLK1 dissociation from phosphoreceptor proteins and subsequent removal from kinetochores, allowing silencing of the spindle assembly checkpoint (SAC) and chromosome segregation. Monoubiquitination of PLK1 does not lead to PLK1 degradation. The BCR(KLHL22) ubiquitin ligase complex is also responsible for the amino acid-stimulated 'Lys-48' polyubiquitination and proteasomal degradation of DEPDC5. Through the degradation of DEPDC5, releases the GATOR1 complex-mediated inhibition of the TORC1 pathway. It is therefore an amino acid-dependent activator within the amino acid-sensing branch of the TORC1 pathway, indirectly regulating different cellular processes including cell growth and autophagy. In Rattus norvegicus (Rat), this protein is Kelch-like protein 22.